Reading from the N-terminus, the 371-residue chain is Transcriptional regulator of yeast form adherence 2 (371 aa).

The segment at 16-44 (RNPAVLCSFYSKIGACRHGEKCSKKHLKP) adopts a C3H1-type 1 zinc-finger fold. Over residues 94–107 (TVSQIDDSPHSNSG) the composition is skewed to polar residues. The tract at residues 94–194 (TVSQIDDSPH…NIEDAKLEDT (101 aa)) is disordered. The span at 115–124 (VETQEVETEN) shows a compositional bias: acidic residues. The span at 132–194 (GDVKIDHNED…NIEDAKLEDT (63 aa)) shows a compositional bias: basic and acidic residues. Positions 192 to 279 (EDTEKDKLPE…KPVYSDLSPV (88 aa)) constitute an RRM domain. Residues 281–309 (DFNDACCEEYRDYHDCQRGAMCNYMHVRL) form a C3H1-type 2 zinc finger. Residues 337–371 (ELPGDIRSSSSTNDDETNGNENGISSTMAVLEQLS) are disordered. Positions 355–371 (GNENGISSTMAVLEQLS) are enriched in polar residues.

It is found in the nucleus. Transcription factor required for yeast cell adherence to silicone substrate. The polypeptide is Transcriptional regulator of yeast form adherence 2 (TRY2) (Candida albicans (strain SC5314 / ATCC MYA-2876) (Yeast)).